A 387-amino-acid polypeptide reads, in one-letter code: Acetate kinase (387 aa).

Asparagine 14 serves as a coordination point for Mg(2+). Lysine 21 contacts ATP. Arginine 80 is a binding site for substrate. Residue aspartate 137 is the Proton donor/acceptor of the active site. Residues 197–201, 271–273, and 319–323 contribute to the ATP site; these read HLGNG, DFR, and GIGEN. Glutamate 373 lines the Mg(2+) pocket.

It belongs to the acetokinase family. In terms of assembly, homodimer. Mg(2+) serves as cofactor. It depends on Mn(2+) as a cofactor.

The protein resides in the cytoplasm. It catalyses the reaction acetate + ATP = acetyl phosphate + ADP. The protein operates within metabolic intermediate biosynthesis; acetyl-CoA biosynthesis; acetyl-CoA from acetate: step 1/2. Catalyzes the formation of acetyl phosphate from acetate and ATP. Can also catalyze the reverse reaction. The protein is Acetate kinase of Mycobacterium avium (strain 104).